The chain runs to 294 residues: Cytidine deaminase (294 aa).

CMP/dCMP-type deaminase domains follow at residues 48–168 (DEDA…FGPK) and 186–294 (LTGD…VLLG). 89-91 (NME) is a binding site for substrate. A Zn(2+)-binding site is contributed by H102. The Proton donor role is filled by E104. Positions 129 and 132 each coordinate Zn(2+).

This sequence belongs to the cytidine and deoxycytidylate deaminase family. As to quaternary structure, homodimer. It depends on Zn(2+) as a cofactor.

The enzyme catalyses cytidine + H2O + H(+) = uridine + NH4(+). The catalysed reaction is 2'-deoxycytidine + H2O + H(+) = 2'-deoxyuridine + NH4(+). Functionally, this enzyme scavenges exogenous and endogenous cytidine and 2'-deoxycytidine for UMP synthesis. This Escherichia fergusonii (strain ATCC 35469 / DSM 13698 / CCUG 18766 / IAM 14443 / JCM 21226 / LMG 7866 / NBRC 102419 / NCTC 12128 / CDC 0568-73) protein is Cytidine deaminase.